We begin with the raw amino-acid sequence, 320 residues long: ATP synthase gamma chain (320 aa).

It belongs to the ATPase gamma chain family. F-type ATPases have 2 components, CF(1) - the catalytic core - and CF(0) - the membrane proton channel. CF(1) has five subunits: alpha(3), beta(3), gamma(1), delta(1), epsilon(1). CF(0) has three main subunits: a, b and c.

It localises to the cell membrane. Functionally, produces ATP from ADP in the presence of a proton gradient across the membrane. The gamma chain is believed to be important in regulating ATPase activity and the flow of protons through the CF(0) complex. This Lactobacillus delbrueckii subsp. bulgaricus (strain ATCC 11842 / DSM 20081 / BCRC 10696 / JCM 1002 / NBRC 13953 / NCIMB 11778 / NCTC 12712 / WDCM 00102 / Lb 14) protein is ATP synthase gamma chain.